The primary structure comprises 197 residues: Recombination protein RecR (197 aa).

The C4-type zinc finger occupies 57–72 (CSRCGYLTDFDPCLIC). In terms of domain architecture, Toprim spans 80–174 (SLICIGEESS…KVTRLAHGLP (95 aa)).

The protein belongs to the RecR family.

May play a role in DNA repair. It seems to be involved in an RecBC-independent recombinational process of DNA repair. It may act with RecF and RecO. This Syntrophomonas wolfei subsp. wolfei (strain DSM 2245B / Goettingen) protein is Recombination protein RecR.